The chain runs to 246 residues: Large ribosomal subunit protein uL2 (246 aa).

The tract at residues 197–226 (SPYAHPHGGGSHPKGGTPVPKTAPPGQKVG) is disordered.

The protein belongs to the universal ribosomal protein uL2 family. As to quaternary structure, part of the 50S ribosomal subunit. Forms a bridge to the 30S subunit in the 70S ribosome.

One of the primary rRNA binding proteins. Required for association of the 30S and 50S subunits to form the 70S ribosome, for tRNA binding and peptide bond formation. It has been suggested to have peptidyltransferase activity; this is somewhat controversial. Makes several contacts with the 16S rRNA in the 70S ribosome. This chain is Large ribosomal subunit protein uL2, found in Pyrobaculum islandicum (strain DSM 4184 / JCM 9189 / GEO3).